Here is a 492-residue protein sequence, read N- to C-terminus: Catalase isozyme 2 (492 aa).

The segment at 1-32 (MDPYKFRPSSSNDTPFWTTNAGDPVSNNNSSM) is disordered. The segment covering 8-32 (PSSSNDTPFWTTNAGDPVSNNNSSM) has biased composition (polar residues). Active-site residues include His-65 and Asn-138. Residue Tyr-348 participates in heme binding.

This sequence belongs to the catalase family. Homotetramer. Heme serves as cofactor. In terms of tissue distribution, abundant in hypocotyls and roots. Low levels are seen in the endosperms and cotyledons.

It localises to the peroxisome. It is found in the glyoxysome. The enzyme catalyses 2 H2O2 = O2 + 2 H2O. In terms of biological role, occurs in almost all aerobically respiring organisms and serves to protect cells from the toxic effects of hydrogen peroxide. This chain is Catalase isozyme 2 (CAT2), found in Ricinus communis (Castor bean).